Reading from the N-terminus, the 240-residue chain is Transcriptional regulatory protein rxt2 (240 aa).

The protein belongs to the RXT2 family. In terms of assembly, component of the RPD3C(L) complex.

The protein resides in the nucleus. Functionally, component of the RPD3C(L) histone deacetylase complex (HDAC) responsible for the deacetylation of lysine residues on the N-terminal part of the core histones (H2A, H2B, H3 and H4). Histone deacetylation gives a tag for epigenetic repression and plays an important role in transcriptional regulation, cell cycle progression and developmental events. The protein is Transcriptional regulatory protein rxt2 (rtx2) of Schizosaccharomyces pombe (strain 972 / ATCC 24843) (Fission yeast).